A 597-amino-acid chain; its full sequence is Gamma-terpinene synthase, chloroplastic (597 aa).

A chloroplast-targeting transit peptide spans 1–47 (MATLSMQVSILSKQVKNLNSFGMRASKLPMVARRVDVSTTRLRPICS). The Mn(2+) site is built by Asp-350 and Asp-354. Residues 350–354 (DDVYD) carry the DDXXD motif motif. Homodimerization regions lie at residues 356-362 (YGTLDEL) and 428-464 (EAKW…YFTL). Positions 494 and 502 each coordinate Mn(2+).

It belongs to the terpene synthase family. Homodimer. Mn(2+) is required as a cofactor. Requires Mg(2+) as cofactor.

Its subcellular location is the plastid. The protein resides in the chloroplast. The enzyme catalyses (2E)-geranyl diphosphate = gamma-terpinene + diphosphate. It participates in secondary metabolite biosynthesis; terpenoid biosynthesis. Involved in the biosynthesis of phenolic monoterpenes natural products thymol and carvacrol which have a broad range of biological activities acting as antimicrobial compounds, insecticides, antioxidants and pharmaceutical agents. Monoterpene synthase which catalyzes the conversion of geranyl diphosphate (GPP) to gamma-terpinene. This chain is Gamma-terpinene synthase, chloroplastic, found in Thymus caespititius (Cretan thyme).